We begin with the raw amino-acid sequence, 313 residues long: Protein FixB (313 aa).

Position 255–283 (255–283) interacts with FAD; that stretch reads LYLAVGISGQIQHMVGANASQTIFAINKD.

It belongs to the ETF alpha-subunit/FixB family. As to quaternary structure, heterodimer of FixA and FixB.

It participates in amine and polyamine metabolism; carnitine metabolism. Functionally, required for anaerobic carnitine reduction. May bring reductant to CaiA. In Escherichia coli O6:K15:H31 (strain 536 / UPEC), this protein is Protein FixB.